The chain runs to 324 residues: UDP-N-acetylenolpyruvoylglucosamine reductase (324 aa).

The FAD-binding PCMH-type domain maps to Ala38–Gln217. Arg183 is a catalytic residue. Ser232 acts as the Proton donor in catalysis. Residue Glu302 is part of the active site.

The protein belongs to the MurB family. The cofactor is FAD.

It localises to the cytoplasm. It carries out the reaction UDP-N-acetyl-alpha-D-muramate + NADP(+) = UDP-N-acetyl-3-O-(1-carboxyvinyl)-alpha-D-glucosamine + NADPH + H(+). The protein operates within cell wall biogenesis; peptidoglycan biosynthesis. Its function is as follows. Cell wall formation. The chain is UDP-N-acetylenolpyruvoylglucosamine reductase from Allorhizobium ampelinum (strain ATCC BAA-846 / DSM 112012 / S4) (Agrobacterium vitis (strain S4)).